Consider the following 476-residue polypeptide: Glycogen synthase (476 aa).

Residue lysine 15 coordinates ADP-alpha-D-glucose.

This sequence belongs to the glycosyltransferase 1 family. Bacterial/plant glycogen synthase subfamily.

It carries out the reaction [(1-&gt;4)-alpha-D-glucosyl](n) + ADP-alpha-D-glucose = [(1-&gt;4)-alpha-D-glucosyl](n+1) + ADP + H(+). It participates in glycan biosynthesis; glycogen biosynthesis. Synthesizes alpha-1,4-glucan chains using ADP-glucose. This Actinobacillus succinogenes (strain ATCC 55618 / DSM 22257 / CCUG 43843 / 130Z) protein is Glycogen synthase.